Here is a 492-residue protein sequence, read N- to C-terminus: UPF0652 protein C22H10.08 (492 aa).

The protein belongs to the UPF0652 family.

The protein localises to the cytoplasm. The protein resides in the nucleus. This Schizosaccharomyces pombe (strain 972 / ATCC 24843) (Fission yeast) protein is UPF0652 protein C22H10.08.